Reading from the N-terminus, the 1063-residue chain is Structural polyprotein (1063 aa).

Residues 1-131 are disordered; sequence MASTTPITME…LGPPTNPFQA (131 aa). The human C1QBP/SF2P32-binding stretch occupies residues 30 to 69; the sequence is GASQSRRPRPPRQRDSSTSGDDSGRDSGGPRRRRGNRGRG. S46 bears the Phosphoserine; by host mark. Residues 70 to 87 show a composition bias toward basic and acidic residues; sequence QLRDWSRAPPPPEERQES. A compositionally biased stretch (pro residues) spans 93–107; it reads APKPSRAPPQQPQPP. C153 and C197 form a disulfide bridge. Positions 279–300 are functions as E2 signal peptide; it reads GAPQAFLAGLLLAAVAVGTARA. Topologically, residues 301-534 are extracellular; it reads GLQPRADMAA…LWLATANALS (234 aa). N-linked (GlcNAc...) asparagine; by host glycosylation is found at N353, N371, N410, and N429. Residues 535–555 form a helical membrane-spanning segment; sequence LDHALAAFVLLVPWVLIFMVC. The Cytoplasmic segment spans residues 556-582; sequence RRACRRRGAAAALTAVVLQGYNPPAYG. A functions as E1 signal peptide region spans residues 563 to 582; sequence GAAAALTAVVLQGYNPPAYG. Topologically, residues 583-1028 are extracellular; it reads EEAFTYLCTA…QTWAEWAAAH (446 aa). Disulfide bonds link C590-C595, C619-C824, C641-C653, C699-C712, C758-C767, C807-C817, C931-C934, and C950-C983. The N-linked (GlcNAc...) asparagine; by host glycan is linked to N658. 2 residues coordinate Ca(2+): N670 and A671. Ca(2+) is bound by residues D718 and T719. 2 N-linked (GlcNAc...) asparagine; by host glycosylation sites follow: N759 and N791. 2 O-linked (GalNAc...) threonine; by host glycosylation sites follow: T1011 and T1012. A helical transmembrane segment spans residues 1029 to 1049; sequence WWQLTLGAICALLLAGLLACC. Residues 1050-1063 lie on the Extracellular side of the membrane; it reads AKCLYYLRGAIAPR.

Homodimer; further assembles into homooligomer. Interacts with human C1QBP. Interacts (via N-terminus) with protease/methyltransferase p150. In terms of assembly, heterodimer with spike glycoprotein E2. As to quaternary structure, heterodimer with spike glycoprotein E1. Structural polyprotein: Specific enzymatic cleavages in vivo yield mature proteins. Two signal peptidase-mediated cleavages within the polyprotein produce the structural proteins capsid, E2, and E1. The E2 signal peptide remains attached to the C-terminus of the capsid protein after cleavage by the signal peptidase. Another signal peptide at E2 C-terminus directs E1 to the ER, with a similar mechanism. In terms of processing, contains three N-linked oligosaccharides. Post-translationally, capsid is phosphorylated on Ser-46 by host. This phosphorylation negatively regulates capsid protein RNA-binding activity. Dephosphorylated by human PP1A.

The protein localises to the virion. It localises to the host cytoplasm. Its subcellular location is the host mitochondrion. The protein resides in the virion membrane. It is found in the host Golgi apparatus membrane. In terms of biological role, capsid protein interacts with genomic RNA and assembles into icosahedric core particles 65-70 nm in diameter. The resulting nucleocapsid eventually associates with the cytoplasmic domain of E2 at the cell membrane, leading to budding and formation of mature virions from host Golgi membranes. Phosphorylation negatively regulates RNA-binding activity, possibly delaying virion assembly during the viral replication phase. Capsid protein dimerizes and becomes disulfide-linked in the virion. Modulates genomic RNA replication. Modulates subgenomic RNA synthesis by interacting with human C1QBP/SF2P32. Induces both perinuclear clustering of mitochondria and the formation of electron-dense intermitochondrial plaques, both hallmarks of rubella virus infected cells. Induces apoptosis when expressed in transfected cells. Functionally, responsible for viral attachment to target host cell, by binding to the cell receptor. Its transport to the plasma membrane depends on interaction with E1 protein. The surface glycoproteins display an irregular helical organization and a pseudo-tetrameric inner nucleocapsid arrangement. Its function is as follows. Class II viral fusion protein. Fusion activity is inactive as long as E1 is bound to E2 in mature virion. After virus attachment to target cell and clathrin-mediated endocytosis, acidification of the endosome would induce dissociation of E1/E2 heterodimer and concomitant trimerization of the E1 subunits. This E1 homotrimer is fusion active, and promotes release of viral nucleocapsid in cytoplasm after endosome and viral membrane fusion. The cytoplasmic tail of spike glycoprotein E1 modulates virus release. The surface glycoproteins display an irregular helical organization and a pseudo-tetrameric inner nucleocapsid arrangement. The sequence is that of Structural polyprotein from Homo sapiens (Human).